A 369-amino-acid polypeptide reads, in one-letter code: Transcription factor GTE6 (369 aa).

Residues 89–198 (KRMQDLMRQF…EKFEEKWAHF (110 aa)) form the Bromo domain. The stretch at 201 to 263 (KVQEEEKIRE…VERCRKITIE (63 aa)) forms a coiled coil. The 82-residue stretch at 250-331 (MRKVVERCRK…DALDNAMKKK (82 aa)) folds into the NET domain. The segment covering 329–348 (KKKKEEETKTRELSGAQKKE) has biased composition (basic and acidic residues). The interval 329–369 (KKKKEEETKTRELSGAQKKEVSKKRNATTKLAERKTKRSRI) is disordered. The short motif at 351–368 (KKRNATTKLAERKTKRSR) is the Bipartite nuclear localization signal element.

As to expression, abundantly expressed in flowers. Weakly expressed in roots, leaves and siliques; and undetectable in 5-day-old seedlings. In the basal rosette leaves of 21-day-old plants, it is more abundant in leaves 6 and 7, which possess narrow elliptical laminae, than in leaves 1-4, which have round laminae, suggesting a possible correlation between its expression and the formation of elliptical leaf laminae in mature leaves.

It localises to the nucleus. Regulates differences in leaf patterning between juvenile and mature leaves by controlling differences in the development of primordia produced during juvenile and mature phases. Acts by activating transcription of the myb-domain protein AS1, a gene involved in leaf-axis specification. Associates with the promoter and the start of the transcribed region of AS1 and up-regulates expression of AS1 through acetylation of histones H3 and H4. The sequence is that of Transcription factor GTE6 (GTE6) from Arabidopsis thaliana (Mouse-ear cress).